A 504-amino-acid polypeptide reads, in one-letter code: Probable cytosol aminopeptidase (504 aa).

Positions 268 and 273 each coordinate Mn(2+). Residue Lys-280 is part of the active site. Mn(2+) contacts are provided by Asp-291, Asp-350, and Glu-352. The active site involves Arg-354.

This sequence belongs to the peptidase M17 family. Mn(2+) is required as a cofactor.

It localises to the cytoplasm. It carries out the reaction Release of an N-terminal amino acid, Xaa-|-Yaa-, in which Xaa is preferably Leu, but may be other amino acids including Pro although not Arg or Lys, and Yaa may be Pro. Amino acid amides and methyl esters are also readily hydrolyzed, but rates on arylamides are exceedingly low.. The catalysed reaction is Release of an N-terminal amino acid, preferentially leucine, but not glutamic or aspartic acids.. In terms of biological role, presumably involved in the processing and regular turnover of intracellular proteins. Catalyzes the removal of unsubstituted N-terminal amino acids from various peptides. This is Probable cytosol aminopeptidase from Psychromonas ingrahamii (strain DSM 17664 / CCUG 51855 / 37).